Here is a 211-residue protein sequence, read N- to C-terminus: Protein-methionine-sulfoxide reductase heme-binding subunit MsrQ (211 aa).

The next 5 helical transmembrane spans lie at 17 to 37 (LAGLLPFLWLVWAINHGGLGA), 54 to 74 (FLLATLLITPLARYVKQPLLI), 82 to 102 (LWCFAWATLHLTSYALLELGV), 116 to 136 (PYLTLGIISWVILLALAFTST), and 153 to 173 (FVYLVAILAPIHYLWSVKIIS).

The protein belongs to the MsrQ family. In terms of assembly, heterodimer of a catalytic subunit (MsrP) and a heme-binding subunit (MsrQ). The cofactor is FMN. Heme b serves as cofactor.

The protein resides in the cell inner membrane. Functionally, part of the MsrPQ system that repairs oxidized periplasmic proteins containing methionine sulfoxide residues (Met-O), using respiratory chain electrons. Thus protects these proteins from oxidative-stress damage caused by reactive species of oxygen and chlorine generated by the host defense mechanisms. MsrPQ is essential for the maintenance of envelope integrity under bleach stress, rescuing a wide series of structurally unrelated periplasmic proteins from methionine oxidation, including the primary periplasmic chaperone SurA and the lipoprotein Pal. MsrQ provides electrons for reduction to the reductase catalytic subunit MsrP, using the quinone pool of the respiratory chain. This is Protein-methionine-sulfoxide reductase heme-binding subunit MsrQ from Escherichia coli (strain SMS-3-5 / SECEC).